The following is a 250-amino-acid chain: Ubiquinone/menaquinone biosynthesis C-methyltransferase UbiE (250 aa).

S-adenosyl-L-methionine is bound by residues Ser-73, Asp-94, and 122 to 123; that span reads NA.

This sequence belongs to the class I-like SAM-binding methyltransferase superfamily. MenG/UbiE family.

It catalyses the reaction a 2-demethylmenaquinol + S-adenosyl-L-methionine = a menaquinol + S-adenosyl-L-homocysteine + H(+). The catalysed reaction is a 2-methoxy-6-(all-trans-polyprenyl)benzene-1,4-diol + S-adenosyl-L-methionine = a 5-methoxy-2-methyl-3-(all-trans-polyprenyl)benzene-1,4-diol + S-adenosyl-L-homocysteine + H(+). It participates in quinol/quinone metabolism; menaquinone biosynthesis; menaquinol from 1,4-dihydroxy-2-naphthoate: step 2/2. The protein operates within cofactor biosynthesis; ubiquinone biosynthesis. In terms of biological role, methyltransferase required for the conversion of demethylmenaquinol (DMKH2) to menaquinol (MKH2) and the conversion of 2-polyprenyl-6-methoxy-1,4-benzoquinol (DDMQH2) to 2-polyprenyl-3-methyl-6-methoxy-1,4-benzoquinol (DMQH2). This Legionella pneumophila (strain Paris) protein is Ubiquinone/menaquinone biosynthesis C-methyltransferase UbiE.